The following is a 286-amino-acid chain: 33 kDa chaperonin (286 aa).

Intrachain disulfides connect cysteine 225-cysteine 227 and cysteine 258-cysteine 261.

The protein belongs to the HSP33 family. Post-translationally, under oxidizing conditions two disulfide bonds are formed involving the reactive cysteines. Under reducing conditions zinc is bound to the reactive cysteines and the protein is inactive.

It is found in the cytoplasm. In terms of biological role, redox regulated molecular chaperone. Protects both thermally unfolding and oxidatively damaged proteins from irreversible aggregation. Plays an important role in the bacterial defense system toward oxidative stress. In Shewanella sp. (strain MR-4), this protein is 33 kDa chaperonin.